The primary structure comprises 337 residues: o-succinylbenzoate synthase (337 aa).

Lys-142 acts as the Proton donor in catalysis. Mg(2+) is bound by residues Asp-170, Glu-199, and Asp-222. Lys-248 serves as the catalytic Proton acceptor.

This sequence belongs to the mandelate racemase/muconate lactonizing enzyme family. MenC type 1 subfamily. A divalent metal cation serves as cofactor.

It carries out the reaction (1R,6R)-6-hydroxy-2-succinyl-cyclohexa-2,4-diene-1-carboxylate = 2-succinylbenzoate + H2O. It functions in the pathway quinol/quinone metabolism; 1,4-dihydroxy-2-naphthoate biosynthesis; 1,4-dihydroxy-2-naphthoate from chorismate: step 4/7. It participates in quinol/quinone metabolism; menaquinone biosynthesis. In terms of biological role, converts 2-succinyl-6-hydroxy-2,4-cyclohexadiene-1-carboxylate (SHCHC) to 2-succinylbenzoate (OSB). The chain is o-succinylbenzoate synthase from Pasteurella multocida (strain Pm70).